A 212-amino-acid chain; its full sequence is EFC-associated protein OPG053 (212 aa).

The Virion surface segment spans residues methionine 1–aspartate 175. 3 cysteine pairs are disulfide-bonded: cysteine 33/cysteine 55, cysteine 47/cysteine 127, and cysteine 107/cysteine 149. The chain crosses the membrane as a helical span at residues proline 176–isoleucine 196. Over arginine 197–valine 212 the chain is Intravirion.

It belongs to the orthopoxvirus OPG053 family. In terms of assembly, component of the entry fusion complex (EFC) composed of OPG053, OPG076, OPG086, OPG094, OPG095, OPG099, OPG107, OPG143, OPG104, OPG147 and OPG155. Except for OPG095 and OPG052, each of the EFC proteins is required for assembly or stability of the complex. Post-translationally, disulfid bonds are oxidized in the cytoplasm by OPG088 protein. In terms of processing, unglycosylated because produced in viral factories instead of the classic ER -Golgi route.

The protein localises to the virion membrane. Its function is as follows. Component of the entry fusion complex (EFC), which consists of 11 proteins. During cell infection, this complex mediates entry of the virion core into the host cytoplasm by a two-step mechanism consisting of lipid mixing of the viral and cellular membranes and subsequent pore formation. The chain is EFC-associated protein OPG053 (OPG053) from Homo sapiens (Human).